A 399-amino-acid chain; its full sequence is Phosphoglycerate kinase (399 aa).

Substrate-binding positions include 22 to 24 (DLN), R37, 60 to 63 (HFGR), R119, and R152. ATP is bound by residues K202, E324, and 354–357 (GGDT).

The protein belongs to the phosphoglycerate kinase family. As to quaternary structure, monomer.

It localises to the cytoplasm. The enzyme catalyses (2R)-3-phosphoglycerate + ATP = (2R)-3-phospho-glyceroyl phosphate + ADP. It functions in the pathway carbohydrate degradation; glycolysis; pyruvate from D-glyceraldehyde 3-phosphate: step 2/5. This chain is Phosphoglycerate kinase, found in Sinorhizobium fredii (strain NBRC 101917 / NGR234).